We begin with the raw amino-acid sequence, 186 residues long: Nicotinamide-nucleotide adenylyltransferase (186 aa).

The protein belongs to the archaeal NMN adenylyltransferase family.

Its subcellular location is the cytoplasm. The catalysed reaction is beta-nicotinamide D-ribonucleotide + ATP + H(+) = diphosphate + NAD(+). Its pathway is cofactor biosynthesis; NAD(+) biosynthesis; NAD(+) from nicotinamide D-ribonucleotide: step 1/1. This Pyrococcus abyssi (strain GE5 / Orsay) protein is Nicotinamide-nucleotide adenylyltransferase.